The primary structure comprises 382 residues: Alkanesulfonate monooxygenase (382 aa).

Belongs to the SsuD family. Homotetramer.

It catalyses the reaction an alkanesulfonate + FMNH2 + O2 = an aldehyde + FMN + sulfite + H2O + 2 H(+). Catalyzes the desulfonation of aliphatic sulfonates. The chain is Alkanesulfonate monooxygenase from Buttiauxella sp. (strain PNBS).